Reading from the N-terminus, the 176-residue chain is HTH-type transcriptional regulator DctR (176 aa).

Residues 109–174 form the HTH luxR-type domain; that stretch reads VPEANVSLSR…ELVRHQHIDY (66 aa). The H-T-H motif DNA-binding region spans 133–152; sequence TEDILEKLKISLKTFYCHKH.

In terms of biological role, may act as a transcriptional regulator of dctA. Could be involved in the regulation of the genes coding for the type III secretion system in enterohaemorragic strains. The polypeptide is HTH-type transcriptional regulator DctR (dctR) (Escherichia coli O157:H7).